The following is a 1007-amino-acid chain: Serine/threonine-protein kinase PRP4 homolog (1007 aa).

The interval 1-104 (MAATEPPSLR…PAKRTKLDDL (104 aa)) is disordered. Residue A2 is modified to N-acetylalanine. 4 positions are modified to phosphoserine: S8, S21, S24, and S33. Basic residues-rich tracts occupy residues 40-60 (KHSRHKKKKHKHRSKHKKHKH) and 68-82 (KKHKHKHKHKKHKRK). The span at 83–92 (EVLDASDKEG) shows a compositional bias: basic and acidic residues. A phosphoserine mark is found at S88 and S94. K100 carries the N6-acetyllysine; alternate modification. A Glycyl lysine isopeptide (Lys-Gly) (interchain with G-Cter in SUMO2); alternate cross-link involves residue K100. K112 participates in a covalent cross-link: Glycyl lysine isopeptide (Lys-Gly) (interchain with G-Cter in SUMO2). A Glycyl lysine isopeptide (Lys-Gly) (interchain with G-Cter in SUMO2); alternate cross-link involves residue K118. K118 participates in a covalent cross-link: Glycyl lysine isopeptide (Lys-Gly) (interchain with G-Cter in SUMO1); alternate. S132 bears the Phosphoserine mark. At Y141 the chain carries Phosphotyrosine. Disordered regions lie at residues 141–535 (YESG…EDEE) and 560–583 (NISVPSEPSSPQSSTRSRSPSPDD). Phosphoserine is present on residues S143, S145, and S167. A compositionally biased stretch (low complexity) spans 158–169 (GNRSSTRSSSTR). Glycyl lysine isopeptide (Lys-Gly) (interchain with G-Cter in SUMO2) cross-links involve residues K171 and K178. Composition is skewed to basic residues over residues 180 to 203 (SAKKRSKSRSKERTRHRSDKRKSK) and 215 to 231 (RSKSKERRKSKSPSKRS). Phosphoserine is present on residues S240, S242, S258, S278, S292, and S294. Residues 248–271 (RSQEKVGKARSPADEKIKSEEKGK) show a composition bias toward basic and acidic residues. Residues 294–303 (SPVDLRDKSK) are compositionally biased toward basic and acidic residues. The span at 304 to 315 (DRRSRSKERKSK) shows a compositional bias: basic residues. Basic and acidic residues predominate over residues 316 to 325 (RSEIDKEKKP). Residues S328, S354, S356, S366, and S368 each carry the phosphoserine modification. A compositionally biased stretch (basic residues) spans 342–367 (PSRRPGRSPKRRSLSPKQRDKSRRSR). Phosphothreonine is present on T385. S387 is subject to Phosphoserine. Composition is skewed to basic and acidic residues over residues 395–408 (RSLERKRREPERRR) and 415–429 (RPRDDILGRCERSKD). Phosphoserine is present on residues S427, S431, and S437. Residues 438-497 (PSRRRSRSPIRRRSRSPLRRSRSPRRRSRSPRRRDRSRRSRSRLRRRSRSRGGHRRRSRS) show a composition bias toward basic residues. S518, S519, S520, S565, S569, S576, S578, and S580 each carry phosphoserine. The span at 518 to 535 (SSSDDNLEDFDVEEEDEE) shows a compositional bias: acidic residues. The span at 562–581 (SVPSEPSSPQSSTRSRSPSP) shows a compositional bias: low complexity. Residues K593 and K659 each participate in a glycyl lysine isopeptide (Lys-Gly) (interchain with G-Cter in SUMO2) cross-link. Residues 687–1003 (YNVYGYTGQG…INQALQHAFI (317 aa)) enclose the Protein kinase domain. Residues 693-701 (TGQGVFSNV) and K717 contribute to the ATP site. K717 bears the N6-acetyllysine mark. The active-site Proton acceptor is D815. Y849 carries the phosphotyrosine modification. Residue S852 is modified to Phosphoserine.

The protein belongs to the protein kinase superfamily. CMGC Ser/Thr protein kinase family. In terms of assembly, interacts with CLK1 C-terminus. Associates with the U5 snRNP and NCOR1 deacetylase complexes. Identified in the spliceosome C complex. Post-translationally, phosphorylated by CLK1. Autophosphorylated; phosphorylation inhibits interaction with its targets, such as PRPF6 or SMARCA4.

Its subcellular location is the nucleus. It is found in the chromosome. The protein localises to the centromere. The protein resides in the kinetochore. The catalysed reaction is L-seryl-[protein] + ATP = O-phospho-L-seryl-[protein] + ADP + H(+). It carries out the reaction L-threonyl-[protein] + ATP = O-phospho-L-threonyl-[protein] + ADP + H(+). Serine/threonine kinase involved in spliceosomal assembly as well as mitosis and signaling regulation. Connects chromatin mediated regulation of transcription and pre-mRNA splicing. During spliceosomal assembly, interacts with and phosphorylates PRPF6 and PRPF31, components of the U4/U6-U5 tri-small nuclear ribonucleoprotein (snRNP), to facilitate the formation of the spliceosome B complex. Plays a role in regulating transcription and the spindle assembly checkpoint (SAC). Associates with U5 snRNP and NCOR1 deacetylase complexes which may allow a coordination of pre-mRNA splicing with chromatin remodeling events involved in transcriptional regulation. Associates and probably phosphorylates SMARCA4 and NCOR1. Phosphorylates SRSF1. Associates with kinetochores during mitosis and is necessary for recruitment and maintenance of the checkpoint proteins such as MAD1L1 and MAD12L1 at the kinetochores. Phosphorylates and regulates the activity of the transcription factors such as ELK1 and KLF13. Phosphorylates nuclear YAP1 and WWTR1/TAZ which induces nuclear exclusion and regulates Hippo signaling pathway, involved in tissue growth control. This chain is Serine/threonine-protein kinase PRP4 homolog (Prp4k), found in Rattus norvegicus (Rat).